The chain runs to 98 residues: Large ribosomal subunit protein uL23 (98 aa).

The protein belongs to the universal ribosomal protein uL23 family. As to quaternary structure, part of the 50S ribosomal subunit. Contacts protein L29, and trigger factor when it is bound to the ribosome.

Functionally, one of the early assembly proteins it binds 23S rRNA. One of the proteins that surrounds the polypeptide exit tunnel on the outside of the ribosome. Forms the main docking site for trigger factor binding to the ribosome. The sequence is that of Large ribosomal subunit protein uL23 from Ruegeria sp. (strain TM1040) (Silicibacter sp.).